Here is a 156-residue protein sequence, read N- to C-terminus: Arginine repressor (156 aa).

The protein belongs to the ArgR family.

The protein localises to the cytoplasm. It participates in amino-acid biosynthesis; L-arginine biosynthesis [regulation]. Its function is as follows. Regulates arginine biosynthesis genes. The polypeptide is Arginine repressor (Vibrio campbellii (strain ATCC BAA-1116)).